We begin with the raw amino-acid sequence, 234 residues long: Bradykinin-releasing enzyme KR-E-1 (234 aa).

The Peptidase S1 domain maps to 1–225 (VIGGDECNIN…YSDWIQSIIA (225 aa)). Intrachain disulfides connect Cys-7/Cys-139, Cys-26/Cys-42, Cys-74/Cys-232, Cys-118/Cys-186, Cys-150/Cys-165, and Cys-176/Cys-201. A glycan (N-linked (GlcNAc...) asparagine) is linked at Asn-20. Catalysis depends on charge relay system residues His-41 and Asp-86. Ser-180 acts as the Charge relay system in catalysis.

This sequence belongs to the peptidase S1 family. Snake venom subfamily. As to quaternary structure, monomer. As to expression, expressed by the venom gland.

The protein resides in the secreted. Bradykinin-releasing enzyme. Releases bradykinin from bovine HMW kininogen. Has anticoagulant activity. Increases permeability of capillaries by intradermal injection into rabbits. This chain is Bradykinin-releasing enzyme KR-E-1, found in Gloydius ussuriensis (Ussuri mamushi).